Consider the following 947-residue polypeptide: Serine-aspartate repeat-containing protein C (947 aa).

A signal peptide spans 1-50 (MNNKKTATNRKGMIPNRLNKFSIRKYSVGTASILVGTTLIFGLSGHEAKA). Residues 51-164 (AEHTNGELNQ…STTPKTTTIK (114 aa)) are disordered. The segment at 51 to 495 (AEHTNGELNQ…GSSTANGDQK (445 aa)) is ligand binding A region. A compositionally biased stretch (polar residues) spans 56–71 (GELNQSKNETTAPSEN). A compositionally biased stretch (basic and acidic residues) spans 72–83 (KTTKKVDSRQLK). The span at 84-155 (DNTQTATADQ…SNLTQAKDVS (72 aa)) shows a compositional bias: polar residues. CNA-B domains are found at residues 496 to 606 (KYNL…YKTP) and 607 to 717 (KYSL…EEET). The tract at residues 678-927 (TQTGTNTTED…NNSNNGTLFG (250 aa)) is disordered. Composition is skewed to acidic residues over residues 685 to 695 (TEDDKDADGGE) and 712 to 886 (YYEE…DSDS). Residues 910 to 914 (LPETG) carry the LPXTG sorting signal motif. The segment covering 912-927 (ETGSENNNSNNGTLFG) has biased composition (low complexity). At Thr-913 the chain carries Pentaglycyl murein peptidoglycan amidated threonine. Residues 914–947 (GSENNNSNNGTLFGGLFAALGSLLLFGRRKKQNK) constitute a propeptide, removed by sortase.

The protein belongs to the serine-aspartate repeat-containing protein (SDr) family. As to quaternary structure, homodimerizes; via N2-Domain. Interacts with host NRXN1; this interaction mediates bacterial attachment to host cells.

It localises to the secreted. Its subcellular location is the cell wall. Cell surface-associated calcium-binding protein which plays an important role in adhesion and pathogenesis. Mediates interactions with components of the extracellular matrix such as host NRXN1 to promote bacterial adhesion. This Staphylococcus aureus (strain USA300) protein is Serine-aspartate repeat-containing protein C (sdrC).